Reading from the N-terminus, the 321-residue chain is Cytochrome c biogenesis protein CcsA (321 aa).

The next 8 membrane-spanning stretches (helical) occupy residues 9–29, 44–64, 71–91, 97–117, 143–163, 227–247, 261–275, and 288–308; these read ILTH…LMTL, GLIA…IYSG, LYES…VPYF, LLST…TSGL, MILS…LLVI, VISL…VWAN, TWAF…IYLH, and AIVA…VNLL.

It belongs to the CcmF/CycK/Ccl1/NrfE/CcsA family. May interact with Ccs1.

The protein resides in the plastid. The protein localises to the chloroplast thylakoid membrane. Required during biogenesis of c-type cytochromes (cytochrome c6 and cytochrome f) at the step of heme attachment. This chain is Cytochrome c biogenesis protein CcsA, found in Nandina domestica (Heavenly bamboo).